Reading from the N-terminus, the 66-residue chain is Large ribosomal subunit protein bL35 (66 aa).

Residues 1–16 show a composition bias toward basic residues; that stretch reads MPKQKTHRASAKRFKR. Positions 1-21 are disordered; sequence MPKQKTHRASAKRFKRTGSGG.

This sequence belongs to the bacterial ribosomal protein bL35 family.

This is Large ribosomal subunit protein bL35 from Streptococcus agalactiae serotype Ia (strain ATCC 27591 / A909 / CDC SS700).